A 550-amino-acid chain; its full sequence is Proteasome-associated ATPase (550 aa).

The stretch at 9–48 (EELARRVASLSAQNERLAQILVEARSKIVGLQQQIDDLAQ) forms a coiled coil. 233-238 (GCGKTL) serves as a coordination point for ATP. The tract at residues 528–550 (KGEGKNPTPAKAIETPHNTGPYL) is disordered. The interval 549–550 (YL) is docks into pockets in the proteasome alpha-ring.

The protein belongs to the AAA ATPase family. As to quaternary structure, homohexamer. Assembles into a hexameric ring structure that caps the 20S proteasome core. Strongly interacts with the prokaryotic ubiquitin-like protein Pup through a hydrophobic interface; the interacting region of ARC lies in its N-terminal coiled-coil domain. There is one Pup binding site per ARC hexamer ring. Upon ATP-binding, the C-terminus of ARC interacts with the alpha-rings of the proteasome core, possibly by binding to the intersubunit pockets.

Its pathway is protein degradation; proteasomal Pup-dependent pathway. ATPase which is responsible for recognizing, binding, unfolding and translocation of pupylated proteins into the bacterial 20S proteasome core particle. May be essential for opening the gate of the 20S proteasome via an interaction with its C-terminus, thereby allowing substrate entry and access to the site of proteolysis. Thus, the C-termini of the proteasomal ATPase may function like a 'key in a lock' to induce gate opening and therefore regulate proteolysis. This chain is Proteasome-associated ATPase, found in Jonesia denitrificans (strain ATCC 14870 / DSM 20603 / BCRC 15368 / CIP 55.134 / JCM 11481 / NBRC 15587 / NCTC 10816 / Prevot 55134) (Listeria denitrificans).